The primary structure comprises 186 residues: GTP cyclohydrolase 1 1 (186 aa).

The protein belongs to the GTP cyclohydrolase I family. Homomer.

The enzyme catalyses GTP + H2O = 7,8-dihydroneopterin 3'-triphosphate + formate + H(+). It participates in cofactor biosynthesis; 7,8-dihydroneopterin triphosphate biosynthesis; 7,8-dihydroneopterin triphosphate from GTP: step 1/1. The sequence is that of GTP cyclohydrolase 1 1 (folE1) from Pseudomonas aeruginosa (strain ATCC 15692 / DSM 22644 / CIP 104116 / JCM 14847 / LMG 12228 / 1C / PRS 101 / PAO1).